The chain runs to 481 residues: Alpha-ketoglutaric semialdehyde dehydrogenase 1 (481 aa).

Residues 154–155 (WN), 178–181 (KAPE), and 231–232 (GS) each bind NADP(+). The active-site Proton acceptor is E253. Residue L254 participates in NADP(+) binding. C287 serves as the catalytic Nucleophile. NADP(+) is bound at residue E384.

It belongs to the aldehyde dehydrogenase family. As to quaternary structure, homotetramer.

The catalysed reaction is 2,5-dioxopentanoate + NADP(+) + H2O = 2-oxoglutarate + NADPH + 2 H(+). It carries out the reaction 2,5-dioxopentanoate + NAD(+) + H2O = 2-oxoglutarate + NADH + 2 H(+). The enzyme catalyses succinate semialdehyde + NAD(+) + H2O = succinate + NADH + 2 H(+). Catalyzes the NAD(P)(+)-dependent oxidation of alpha-ketoglutaric semialdehyde (alphaKGSA) to alpha-ketoglutarate. Is involved in a degradation pathway of L-arabinose that allows A.brasilense to grow on L-arabinose as a sole carbon source. Prefers NAD(+) to NADP(+) as a cosubstrate. Displays broad substrate specificity: exhibits the highest activity with alphaKGSA and succinic semialdehyde as substrates, but to a lesser extent, is also active with glutaraldehyde, benzaldehyde, and a number of aldehydes from C3 to C8. This is Alpha-ketoglutaric semialdehyde dehydrogenase 1 (araE) from Azospirillum brasilense.